The chain runs to 155 residues: Plastocyanin, chloroplastic (155 aa).

A chloroplast-targeting transit peptide spans 1–58 (MAALSSAAVSVPSFAAATPMRSSRSSRMVVRASLGKKAASAAVAMAAGAMLLGGSAMA). Residues 59-155 (QDVLLGANGG…AGMVGKVTVN (97 aa)) form the Plastocyanin-like domain. Cu cation-binding residues include His95, Cys140, His143, and Met148.

The protein belongs to the plastocyanin family. It depends on Cu(2+) as a cofactor.

It is found in the plastid. Its subcellular location is the chloroplast thylakoid membrane. Functionally, participates in electron transfer between P700 and the cytochrome b6-f complex in photosystem I. The protein is Plastocyanin, chloroplastic (PETE) of Hordeum vulgare (Barley).